The chain runs to 646 residues: Choline transporter-like protein 1 (646 aa).

The Cytoplasmic segment spans residues 1-27; the sequence is MGCCGCGSEEGSVRQWKPLEQRSCTDV. The chain crosses the membrane as a helical span at residues 28 to 48; that stretch reads LWLLIFVLFCIGMAIICGFAI. Residues 49-207 lie on the Extracellular side of the membrane; sequence ASGAAQRLVF…RVITGVMTSK (159 aa). The N-linked (GlcNAc...) asparagine glycan is linked to N133. A helical transmembrane segment spans residues 208 to 228; it reads EIIVGLCLMSLVLSILLMVII. Residues 229 to 233 lie on the Cytoplasmic side of the membrane; it reads RYISK. The chain crosses the membrane as a helical span at residues 234–254; it reads VLVWILAILTIIGSIGGTAVL. Over 255-281 the chain is Extracellular; the sequence is WWLYADHKKTLKLDPSQGDVAADNVTA. N-linked (GlcNAc...) asparagine glycosylation occurs at N278. The helical transmembrane segment at 282–302 threads the bilayer; that stretch reads LLVCAIIATVITVILLLLMLI. The Cytoplasmic segment spans residues 303–308; sequence MRKRVA. A helical membrane pass occupies residues 309-329; that stretch reads LTIALFHVAGKVFIHIPFLIF. Residues 330–331 lie on the Extracellular side of the membrane; the sequence is QS. The chain crosses the membrane as a helical span at residues 332–352; sequence LWTFLALAFFWIYWIAVLLLL. The Cytoplasmic portion of the chain corresponds to 353–373; the sequence is ATAGYPQKKDQGYVEFKVSGP. The helical transmembrane segment at 374-394 threads the bilayer; sequence LQYTWIYHLVGLIWISEFILA. Residues 395 to 435 are Extracellular-facing; that stretch reads CQQMTIAGAVVTYYFTRDKHNLPATPILASMCRLIKYHLGT. The chain crosses the membrane as a helical span at residues 436–456; sequence VAKGSFIITLIKIPQMILVYI. Topologically, residues 457–530 are cytoplasmic; sequence HSQLKGKENA…RVAAINTVGD (74 aa). A helical transmembrane segment spans residues 531–551; sequence FVLFLGKLLIVLVTGFVGIIL. Residues 552–559 are Extracellular-facing; the sequence is LNYQRDYT. The helical transmembrane segment at 560 to 580 threads the bilayer; it reads VWVLPLIIICLFAFFVSHCFL. Over 581-646 the chain is Cytoplasmic; that stretch reads SIYEMVVDVL…KSMASGSDNA (66 aa).

It belongs to the CTL (choline transporter-like) family. Present in myelinated structures from brain and spinal cord (at protein level).

It is found in the cell membrane. Its subcellular location is the mitochondrion outer membrane. The catalysed reaction is choline(out) + n H(+)(in) = choline(in) + n H(+)(out). The enzyme catalyses ethanolamine(out) + n H(+)(in) = ethanolamine(in) + n H(+)(out). In terms of biological role, probable choline transporter. May be involved in membrane synthesis and myelin production. The chain is Choline transporter-like protein 1 (slc44a1) from Torpedo marmorata (Marbled electric ray).